The chain runs to 128 residues: MRFAIVVTGPAYGTQQASSAFQFAQALIVEGHELSSVFFYREGVYNANQLTSPASDEFDLVRGWQQLNAQHGVALNICVAAALRRGIVDETEAGRLGLASSNLQPGFTLSGLGALAEASLTCDRVVQF.

Catalysis depends on Cys78, which acts as the Cysteine persulfide intermediate.

Belongs to the DsrE/TusD family. Heterohexamer, formed by a dimer of trimers. The hexameric TusBCD complex contains 2 copies each of TusB, TusC and TusD. The TusBCD complex interacts with TusE.

The protein localises to the cytoplasm. Functionally, part of a sulfur-relay system required for 2-thiolation of 5-methylaminomethyl-2-thiouridine (mnm(5)s(2)U) at tRNA wobble positions. Accepts sulfur from TusA and transfers it in turn to TusE. The polypeptide is Sulfurtransferase TusD (Escherichia coli O139:H28 (strain E24377A / ETEC)).